The primary structure comprises 246 residues: UDP-N-acetyl-D-mannosaminuronic acid transferase (246 aa).

This sequence belongs to the glycosyltransferase 26 family.

It catalyses the reaction UDP-N-acetyl-alpha-D-mannosaminouronate + N-acetyl-alpha-D-glucosaminyl-di-trans,octa-cis-undecaprenyl diphosphate = beta-D-ManNAcA-(1-&gt;4)-alpha-D-GlcNAc-di-trans,octa-cis-undecaprenyl diphosphate + UDP + H(+). It participates in bacterial outer membrane biogenesis; enterobacterial common antigen biosynthesis. In terms of biological role, catalyzes the synthesis of Und-PP-GlcNAc-ManNAcA (Lipid II), the second lipid-linked intermediate involved in enterobacterial common antigen (ECA) synthesis. The protein is UDP-N-acetyl-D-mannosaminuronic acid transferase of Escherichia coli (strain 55989 / EAEC).